The primary structure comprises 198 residues: Transcription factor LBX2 (198 aa).

3 disordered regions span residues 24–46 (MVPRAPSAPQLPESGPGPTSPLC), 63–89 (ALQPSEGRAGPDALGPGPFGRKRRKSR), and 173–198 (DPGLCLGPAGPDSRPHLSDEEIQVDD). Positions 85 to 144 (RRKSRTAFTAQQVLELERRFVFQKYLAPSERDGLATRLGLANAQVVTWFQNRRAKLKRDV) form a DNA-binding region, homeobox.

Its subcellular location is the nucleus. Transcription factor. The polypeptide is Transcription factor LBX2 (LBX2) (Homo sapiens (Human)).